A 4351-amino-acid chain; its full sequence is Protocadherin Fat 2 (4351 aa).

Residues 1-18 (MTLVLLGLAILLLHRAAC) form the signal peptide. Residues 19–4050 (EKSLEETIPP…IKRGDWGQQE (4032 aa)) lie on the Extracellular side of the membrane. Cadherin domains lie at 34 to 148 (THSL…KPLF) and 149 to 256 (SPPS…PPAI). Residues N39, N210, N280, and N330 are each glycosylated (N-linked (GlcNAc...) asparagine). Cadherin domains follow at residues 363 to 458 (EKAV…APVF), 459 to 564 (NRSS…QPMF), 565 to 669 (EEVN…VPVQ), 716 to 820 (DHFP…PPRF), 821 to 925 (PPGG…PPQC), 926 to 1032 (ITEH…SPHF), 1033 to 1142 (SSFV…RPVF), 1138 to 1242 (SRPV…PPMF), 1243 to 1346 (SHKL…SSIP), 1350 to 1448 (DESY…RPQF), 1449 to 1555 (LQDH…SPHF), 1556 to 1660 (TQLR…APVF), 1661 to 1758 (SKDE…PPAF), 1759 to 1872 (GKPT…PPRF), 1873 to 1968 (SEQI…SLQF), 1969 to 2070 (DQDV…IPEF), 2071 to 2171 (QHLP…NPLF), 2172 to 2272 (QSPY…PPTF), 2273 to 2379 (SQLV…PPKF), 2380 to 2481 (REPQ…SPEF), 2482 to 2585 (QQNV…APQF), 2586 to 2692 (KASG…LPKF), 2693 to 2799 (SEPL…RPVF), 2800 to 2908 (EADP…PPRF), 2909 to 3013 (ASED…SPQC), 3014 to 3115 (SQLL…APRF), 3116 to 3220 (FPSH…LPIF), 3221 to 3323 (LNAE…HPRF), 3324 to 3428 (THDL…PPRF), 3429 to 3533 (FQLN…PPST), and 3534 to 3631 (LPLE…VPQQ). Residues N459, N568, N627, and N789 are each glycosylated (N-linked (GlcNAc...) asparagine). An N-linked (GlcNAc...) asparagine glycan is attached at N996. N-linked (GlcNAc...) asparagine glycosylation is found at N1175, N1276, and N1417. N-linked (GlcNAc...) asparagine glycosylation is found at N1899, N1998, N2007, N2102, N2165, N2183, N2325, N2368, N2387, N2430, N2470, N2547, and N2597. N-linked (GlcNAc...) asparagine glycosylation is found at N3127, N3278, and N3312. Residues N3432, N3603, N3770, N3774, N3815, N3842, N3875, and N3906 are each glycosylated (N-linked (GlcNAc...) asparagine). Positions 3775 to 3946 (GTTLRFSGQS…RLETWALSQC (172 aa)) constitute a Laminin G-like domain. 4 disulfides stabilise this stretch: C3914/C3946, C3953/C3964, C3958/C3974, and C3976/C3985. EGF-like domains follow at residues 3949 to 3986 (PGTA…RNCE) and 3988 to 4024 (GREN…DRCE). N3991 carries N-linked (GlcNAc...) asparagine glycosylation. 3 disulfides stabilise this stretch: C3992–C4003, C3997–C4012, and C4014–C4023. Residues 4051-4071 (FLVITVALPLVIIATVGLLLY) traverse the membrane as a helical segment. Residues 4072 to 4351 (CRRRKSHKPV…DYGSCEEVMF (280 aa)) lie on the Cytoplasmic side of the membrane. Residues 4316–4340 (VNGGPATGRSQPRAPPNYEGSDMVE) are disordered.

Homodimer. In terms of tissue distribution, cerebellum-specific expression. Expressed in thin parallel fibers of cerebellar granule cells.

It localises to the cell membrane. It is found in the cell junction. The protein resides in the golgi apparatus. The protein localises to the trans-Golgi network. Its function is as follows. Involved in the regulation of cell migration. May be involved in mediating the organization of the parallel fibers of granule cells during cerebellar development. The chain is Protocadherin Fat 2 (Fat2) from Rattus norvegicus (Rat).